The primary structure comprises 313 residues: Non-functional target of rapamycin complex subunit LST8-2 (313 aa).

WD repeat units follow at residues 1-35 (MFEN…CYFS), 38-76 (YPDL…PHIP), 82-121 (SHTK…CQRE), 123-162 (RSVS…CSCE), 166-205 (EVGT…QTMT), 215-255 (AHNS…LEKV), and 258-297 (GHER…EEMV).

This sequence belongs to the WD repeat LST8 family.

Functionally, probable non-functional protein. This Arabidopsis thaliana (Mouse-ear cress) protein is Non-functional target of rapamycin complex subunit LST8-2.